The chain runs to 290 residues: Nucleotide-binding protein Xfasm12_0753 (290 aa).

13–20 (GLSGSGKS) provides a ligand contact to ATP. Residue 65–68 (DIRS) coordinates GTP.

The protein belongs to the RapZ-like family.

Functionally, displays ATPase and GTPase activities. This chain is Nucleotide-binding protein Xfasm12_0753, found in Xylella fastidiosa (strain M12).